Here is a 208-residue protein sequence, read N- to C-terminus: Large ribosomal subunit protein bL25 (208 aa).

The protein belongs to the bacterial ribosomal protein bL25 family. CTC subfamily. As to quaternary structure, part of the 50S ribosomal subunit; part of the 5S rRNA/L5/L18/L25 subcomplex. Contacts the 5S rRNA. Binds to the 5S rRNA independently of L5 and L18.

In terms of biological role, this is one of the proteins that binds to the 5S RNA in the ribosome where it forms part of the central protuberance. The sequence is that of Large ribosomal subunit protein bL25 from Bartonella quintana (strain Toulouse) (Rochalimaea quintana).